We begin with the raw amino-acid sequence, 862 residues long: Protein translocase subunit SecA (862 aa).

Residues glutamine 86, 104-108, and aspartate 499 contribute to the ATP site; that span reads GEGKT. Zn(2+) contacts are provided by cysteine 848, cysteine 850, cysteine 859, and histidine 860.

This sequence belongs to the SecA family. As to quaternary structure, monomer and homodimer. Part of the essential Sec protein translocation apparatus which comprises SecA, SecYEG and auxiliary proteins SecDF-YajC and YidC. Zn(2+) is required as a cofactor.

Its subcellular location is the cell inner membrane. It is found in the cytoplasm. The catalysed reaction is ATP + H2O + cellular proteinSide 1 = ADP + phosphate + cellular proteinSide 2.. Its function is as follows. Part of the Sec protein translocase complex. Interacts with the SecYEG preprotein conducting channel. Has a central role in coupling the hydrolysis of ATP to the transfer of proteins into and across the cell membrane, serving both as a receptor for the preprotein-SecB complex and as an ATP-driven molecular motor driving the stepwise translocation of polypeptide chains across the membrane. In Ehrlichia chaffeensis (strain ATCC CRL-10679 / Arkansas), this protein is Protein translocase subunit SecA.